We begin with the raw amino-acid sequence, 465 residues long: Beta-1,2-xylosyltransferase XYXT1 (465 aa).

Over 1–11 (MKAAVRSKKSK) the chain is Cytoplasmic. The chain crosses the membrane as a helical; Signal-anchor for type II membrane protein span at residues 12–32 (GSFCHPPLLLLIVAIQFLVIY). Residues 33 to 465 (SPTLDQYMVM…VLLKALHLLR (433 aa)) lie on the Lumenal side of the membrane. N-linked (GlcNAc...) asparagine glycosylation is found at Asn-80, Asn-118, Asn-125, Asn-266, and Asn-403.

The protein belongs to the glycosyltransferase 61 family. Widely expressed.

It localises to the golgi apparatus membrane. Its pathway is glycan metabolism. Its function is as follows. Glycosyltransferase involved in the xylosylation of xylan, the major hemicellulose (non-cellulosic component) of primary and secondary walls of angiosperms. Possesses beta-1,2-xylosyltransferase activity, transferring xylose from UDP-xylose to the xylan backbone. Catalyzes the addition of 2-O-xylosyl side chains to the xylan backbone. In Oryza sativa subsp. japonica (Rice), this protein is Beta-1,2-xylosyltransferase XYXT1.